A 234-amino-acid polypeptide reads, in one-letter code: L-cystine transport system permease protein TcyB (234 aa).

Transmembrane regions (helical) follow at residues 8-28 (ALTLGTAIPWDLVQQSFWPIL), 36-56 (IPLTILSFIFGMILALITALA), 78-98 (TPLLVQLFIIFYLFPAFNVTL), 100-120 (PFPSAVIAFSLNVGAYASEII), and 199-219 (ILVIYIEAAFIYWIICFLLSL). The ABC transmembrane type-1 domain occupies 32–221 (IYYTIPLTIL…IICFLLSLVQ (190 aa)).

It belongs to the binding-protein-dependent transport system permease family. The complex is composed of two ATP-binding proteins (TcyC), two transmembrane proteins (TcyB) and a solute-binding protein (TcyA).

It is found in the cell membrane. Functionally, part of the ABC transporter complex TcyABC involved in L-cystine import. Probably responsible for the translocation of the substrate across the membrane. The protein is L-cystine transport system permease protein TcyB (tcyB) of Bacillus subtilis (strain 168).